A 446-amino-acid polypeptide reads, in one-letter code: tRNA modification GTPase MnmE (446 aa).

Residues R22, E80, and R119 each coordinate (6S)-5-formyl-5,6,7,8-tetrahydrofolate. The TrmE-type G domain occupies 215-370 (GFKVAIIGKP…LILALENIMN (156 aa)). N225 serves as a coordination point for K(+). Residues 225 to 230 (NVGKSS), 244 to 250 (SDIAGTT), and 269 to 272 (DTAG) each bind GTP. Mg(2+) is bound at residue S229. K(+) is bound by residues S244, I246, and T249. Residue T250 participates in Mg(2+) binding. Position 446 (K446) interacts with (6S)-5-formyl-5,6,7,8-tetrahydrofolate.

It belongs to the TRAFAC class TrmE-Era-EngA-EngB-Septin-like GTPase superfamily. TrmE GTPase family. In terms of assembly, homodimer. Heterotetramer of two MnmE and two MnmG subunits. K(+) is required as a cofactor.

It localises to the cytoplasm. Functionally, exhibits a very high intrinsic GTPase hydrolysis rate. Involved in the addition of a carboxymethylaminomethyl (cmnm) group at the wobble position (U34) of certain tRNAs, forming tRNA-cmnm(5)s(2)U34. In Sulfurimonas denitrificans (strain ATCC 33889 / DSM 1251) (Thiomicrospira denitrificans (strain ATCC 33889 / DSM 1251)), this protein is tRNA modification GTPase MnmE.